Consider the following 102-residue polypeptide: Small ribosomal subunit protein uS10 (102 aa).

The protein belongs to the universal ribosomal protein uS10 family. Part of the 30S ribosomal subunit.

Involved in the binding of tRNA to the ribosomes. This Methylobacterium nodulans (strain LMG 21967 / CNCM I-2342 / ORS 2060) protein is Small ribosomal subunit protein uS10.